Consider the following 415-residue polypeptide: Dynein assembly factor with WD repeat domains 1 (415 aa).

WD repeat units follow at residues 90 to 129 (AHIL…ELHT), 132 to 174 (GHKN…HTFR), 175 to 214 (GHTA…EVVT), 217 to 256 (GHLA…KVHT), 259 to 298 (GHCA…YVAT), 301 to 340 (GHDD…CVTK), 343 to 384 (GHEG…QVLE), and 386 to 415 (HTDE…RIWR).

This sequence belongs to the WD repeat WDR69 family. In terms of assembly, interacts with IFT46. In terms of tissue distribution, in early mouse embryos, expression is limited to distal, motile ciliated cells of the node.

It is found in the cytoplasm. It localises to the cytoskeleton. The protein resides in the flagellum basal body. Its subcellular location is the flagellum axoneme. Its function is as follows. Required for axonemal dynein assembly and ciliary motility in ciliated organs, including Kupffer's vesicle, during embryogenesis. Facilitates the onset of robust cilia motility during development. This is Dynein assembly factor with WD repeat domains 1 from Mus musculus (Mouse).